Reading from the N-terminus, the 586-residue chain is Pyruvate kinase (586 aa).

Arg32 provides a ligand contact to substrate. K(+)-binding residues include Asn34, Ser36, Asp66, and Thr67. Asn34–His37 is a binding site for ATP. ATP-binding residues include Arg73 and Lys156. Residue Glu222 coordinates Mg(2+). 3 residues coordinate substrate: Gly245, Asp246, and Thr278. Asp246 contributes to the Mg(2+) binding site.

This sequence belongs to the pyruvate kinase family. It in the C-terminal section; belongs to the PEP-utilizing enzyme family. Requires Mg(2+) as cofactor. The cofactor is K(+).

The enzyme catalyses pyruvate + ATP = phosphoenolpyruvate + ADP + H(+). It functions in the pathway carbohydrate degradation; glycolysis; pyruvate from D-glyceraldehyde 3-phosphate: step 5/5. This chain is Pyruvate kinase (pyk), found in Staphylococcus saprophyticus subsp. saprophyticus (strain ATCC 15305 / DSM 20229 / NCIMB 8711 / NCTC 7292 / S-41).